Consider the following 1007-residue polypeptide: RNA-binding protein 26 (1007 aa).

Residue Lys-94 forms a Glycyl lysine isopeptide (Lys-Gly) (interchain with G-Cter in SUMO2) linkage. Lys-106 participates in a covalent cross-link: Glycyl lysine isopeptide (Lys-Gly) (interchain with G-Cter in SUMO1); alternate. Residue Lys-106 forms a Glycyl lysine isopeptide (Lys-Gly) (interchain with G-Cter in SUMO2); alternate linkage. Residues 106–118 (KKEEITKEEEREK) are compositionally biased toward basic and acidic residues. Residues 106–241 (KKEEITKEEE…YTPVSSVPSI (136 aa)) are disordered. The residue at position 127 (Ser-127) is a Phosphoserine. The span at 134–168 (RYRENRSRDERKKDDRSRKRDYDRNPPRRDSYRDR) shows a compositional bias: basic and acidic residues. Basic residues predominate over residues 169–186 (YNRRRGRSRSYSRSRSRS). Composition is skewed to basic and acidic residues over residues 187 to 201 (WSKE…DRSR) and 209 to 227 (RSRE…RTDP). A compositionally biased stretch (polar residues) spans 228–241 (LENNYTPVSSVPSI). A C3H1-type zinc finger spans residues 288-316 (PMPKKRCRDYDEKGFCMRGDMCPFDHGSD). Over residues 334-388 (QPPVVEGPPPPGLPPPPPILTPPPVNLRPPVPPPGPLPPSLPPVTGPPPPLPPLQ) the composition is skewed to pro residues. Disordered stretches follow at residues 334–404 (QPPV…SSVP) and 460–519 (IGLT…TNSP). A compositionally biased stretch (low complexity) spans 394-404 (APPNSATSSVP). Ser-496 is subject to Phosphoserine. The residue at position 510 (Lys-510) is an N6-acetyllysine. Ser-518 is modified (phosphoserine). The region spanning 532–606 (TKLELRKVPP…RFIKVYWHRE (75 aa)) is the RRM 1 domain. Phosphoserine is present on Ser-616. Coiled-coil stretches lie at residues 719-795 (DNNE…KAAS) and 823-847 (KKMQ…EAAK). The tract at residues 853–884 (SGRGRGIHSRGRGAVHGRGRGRGRGRGVPGHA) is disordered. Over residues 857-877 (RGIHSRGRGAVHGRGRGRGRG) the composition is skewed to basic residues. The RRM 2 domain maps to 891–960 (RALEISAFTE…QDLKLAWNKP (70 aa)). A disordered region spans residues 966 to 1007 (AVETEEVEPDEEEFQEESLVDDSLLQDDDEEEEDNESRSWRR). Acidic residues predominate over residues 968 to 1000 (ETEEVEPDEEEFQEESLVDDSLLQDDDEEEEDN).

May be involved in the turnover of nuclear polyadenylated (pA+) RNA. The chain is RNA-binding protein 26 from Homo sapiens (Human).